Reading from the N-terminus, the 687-residue chain is Chloride channel protein ClC-Ka (687 aa).

A run of 4 helical transmembrane segments spans residues 52 to 72 (FLMTLGVLMALVSYAMNFAIG), 161 to 181 (LFLGKVGPFVHLSVMIAAYLG), 202 to 222 (VAAAAVGVATVFAAPFSGVLF), and 236 to 256 (YWRGFFAATCGAFIFRLLAVF). Ca(2+)-binding residues include E259, E261, D278, and E281. A run of 6 helical transmembrane segments spans residues 282 to 302 (IFFFVALGGICGVLSCAYLFC), 329 to 349 (ALATLLLASITYPPGVGHFLA), 396 to 416 (FTIFGTLAFFLVMKFWMLILA), 417 to 437 (TTIPMPAGYFMPIFILGAAIG), 452 to 472 (IVTGGVTNPIMPGGYALAGAA), and 486 to 506 (LLAFELTGQIVHALPVLMAVL). At 507–687 (AANAIAQSCQ…SNLTNPPAPK (181 aa)) the chain is on the cytoplasmic side. 2 consecutive CBS domains span residues 551–609 (MNHS…EPPS) and 626–684 (CPTE…TNPP).

This sequence belongs to the chloride channel (TC 2.A.49) family. CLCNKA subfamily. Homodimer. Interacts with BSND.

It is found in the basolateral cell membrane. It catalyses the reaction chloride(in) = chloride(out). The catalysed reaction is bromide(in) = bromide(out). The enzyme catalyses nitrate(in) = nitrate(out). It carries out the reaction iodide(out) = iodide(in). Its activity is regulated as follows. Activated by extracellular Ca(2+) and inhibited by extracellular acidic pH. In terms of biological role, anion-selective channel permeable to small monovalent anions with ion selectivity for chloride &gt; bromide &gt; nitrate &gt; iodide. Forms a homodimeric channel where each subunit has its own ion conduction pathway. May conduct double-barreled currents controlled by two types of gates, two fast gates that control each subunit independently and a slow common gate that opens and shuts off both subunits simultaneously. Assembles with the regulatory subunit BSND/Barttin for sorting at the basolateral plasma membrane domain and functional switch to the ion conducting state. CLCNKA:BSND channels display mostly a linear current-voltage relationship with fast gating at negative potentials. Mediates transepithelial chloride transport from the lumen to interstitial compartment along the thin ascending limb of Henle's loop, contributing to generation of hypertonic medullary interstitium as a countercurrent system to achieve urine concentration. Conducts chloride currents in the stria vascularis of the inner ear to establish the endocochlear potential necessary for normal hearing. In Homo sapiens (Human), this protein is Chloride channel protein ClC-Ka.